The primary structure comprises 301 residues: Acetylglutamate kinase (301 aa).

Substrate contacts are provided by residues 68-69 (GG), arginine 90, and asparagine 197.

This sequence belongs to the acetylglutamate kinase family. ArgB subfamily.

The protein resides in the cytoplasm. The catalysed reaction is N-acetyl-L-glutamate + ATP = N-acetyl-L-glutamyl 5-phosphate + ADP. The protein operates within amino-acid biosynthesis; L-arginine biosynthesis; N(2)-acetyl-L-ornithine from L-glutamate: step 2/4. In terms of biological role, catalyzes the ATP-dependent phosphorylation of N-acetyl-L-glutamate. This is Acetylglutamate kinase from Nitrosococcus oceani (strain ATCC 19707 / BCRC 17464 / JCM 30415 / NCIMB 11848 / C-107).